A 348-amino-acid chain; its full sequence is Flavonol synthase/flavanone 3-hydroxylase (348 aa).

The Fe2OG dioxygenase domain occupies 209–309 (EIVYLLKINY…RMSWPVFLEP (101 aa)). H234, D236, and H290 together coordinate Fe cation.

This sequence belongs to the iron/ascorbate-dependent oxidoreductase family. L-ascorbate is required as a cofactor. Requires Fe cation as cofactor.

It localises to the cytoplasm. The enzyme catalyses a (2R,3R)-dihydroflavonol + 2-oxoglutarate + O2 = a flavonol + succinate + CO2 + H2O. It catalyses the reaction a (2S)-flavan-4-one + 2-oxoglutarate + O2 = a (2R,3R)-dihydroflavonol + succinate + CO2. Its pathway is secondary metabolite biosynthesis; flavonoid biosynthesis. In terms of biological role, catalyzes the formation of flavonols from dihydroflavonols. It can act on dihydrokaempferol to produce kaempferol, on dihydroquercetin to produce quercitin and on dihydromyricetin to produce myricetin. In Petunia hybrida (Petunia), this protein is Flavonol synthase/flavanone 3-hydroxylase (FL).